A 218-amino-acid polypeptide reads, in one-letter code: MMGCLPTKQVGRSTHSLNPREAVALAAETSFTVNEVEALYDLFRKLSNSIIKDGLIHKEEFHLALFRNKKTNLFVDRVFDLFDQKGNGVIEFDEFVRSLSVFHPDAPEEQKAGFAFKLYDLRQTGFIERHELKEMVLALLDESDLNITSDAVEMIVDRTFDQADTKGDERIDQEEWNEFVKNNPYVLRNMTLPYLKDLTMVFPSFVIHSEVSEADMVA.

EF-hand domains are found at residues 35–69 (EVEA…FRNK), 70–105 (KTNL…FHPD), 107–142 (PEEQ…LLDE), and 151–186 (AVEM…NPYV).

Belongs to the calcineurin regulatory subunit family. As to quaternary structure, homodimer. As to expression, expressed at low levels in roots, shoots, culms, leaves and young spikelets.

Its function is as follows. Acts as a calcium sensor. CBL proteins interact with CIPK serine-threonine protein kinases. Binding of a CBL protein to the regulatory NAF domain of a CIPK protein lead to the activation of the kinase in a calcium-dependent manner. The protein is Calcineurin B-like protein 5 (CBL5) of Oryza sativa subsp. japonica (Rice).